The chain runs to 177 residues: Large ribosomal subunit protein uL6 (177 aa).

Belongs to the universal ribosomal protein uL6 family. Part of the 50S ribosomal subunit.

Functionally, this protein binds to the 23S rRNA, and is important in its secondary structure. It is located near the subunit interface in the base of the L7/L12 stalk, and near the tRNA binding site of the peptidyltransferase center. This chain is Large ribosomal subunit protein uL6, found in Rhodopseudomonas palustris (strain BisA53).